The following is a 268-amino-acid chain: Small ribosomal subunit protein uS2 (268 aa).

A disordered region spans residues 233-268 (SVREEEFAEAAAEGEEKPARRAPAKKAAKKGDDAQA).

The protein belongs to the universal ribosomal protein uS2 family.

This is Small ribosomal subunit protein uS2 from Stenotrophomonas maltophilia (strain K279a).